A 167-amino-acid chain; its full sequence is SsrA-binding protein (167 aa).

Belongs to the SmpB family.

The protein resides in the cytoplasm. Required for rescue of stalled ribosomes mediated by trans-translation. Binds to transfer-messenger RNA (tmRNA), required for stable association of tmRNA with ribosomes. tmRNA and SmpB together mimic tRNA shape, replacing the anticodon stem-loop with SmpB. tmRNA is encoded by the ssrA gene; the 2 termini fold to resemble tRNA(Ala) and it encodes a 'tag peptide', a short internal open reading frame. During trans-translation Ala-aminoacylated tmRNA acts like a tRNA, entering the A-site of stalled ribosomes, displacing the stalled mRNA. The ribosome then switches to translate the ORF on the tmRNA; the nascent peptide is terminated with the 'tag peptide' encoded by the tmRNA and targeted for degradation. The ribosome is freed to recommence translation, which seems to be the essential function of trans-translation. The polypeptide is SsrA-binding protein (Stenotrophomonas maltophilia (strain R551-3)).